The sequence spans 143 residues: Hemoglobin subunit alpha (143 aa).

Residues 2-143 (VLSPADKTNV…VSTVLVSKYR (142 aa)) form the Globin domain. Ser-4 is subject to Phosphoserine. Residue Lys-8 is modified to N6-succinyllysine. A Phosphothreonine modification is found at Thr-9. At Lys-12 the chain carries N6-succinyllysine. At Lys-17 the chain carries N6-acetyllysine; alternate. Residue Lys-17 is modified to N6-succinyllysine; alternate. At Tyr-25 the chain carries Phosphotyrosine. The residue at position 36 (Ser-36) is a Phosphoserine. Residue Lys-41 is modified to N6-succinyllysine. Ser-51 is modified (phosphoserine). His-60 contacts O2. Residue His-89 coordinates heme b. At Ser-104 the chain carries Phosphoserine. The residue at position 110 (Thr-110) is a Phosphothreonine. Ser-126 carries the post-translational modification Phosphoserine. The residue at position 136 (Thr-136) is a Phosphothreonine. Phosphoserine is present on Ser-140.

The protein belongs to the globin family. Heterotetramer of two alpha chains and two beta chains. As to expression, red blood cells.

In terms of biological role, involved in oxygen transport from the lung to the various peripheral tissues. Its function is as follows. Hemopressin acts as an antagonist peptide of the cannabinoid receptor CNR1. Hemopressin-binding efficiently blocks cannabinoid receptor CNR1 and subsequent signaling. This chain is Hemoglobin subunit alpha (HBA), found in Pipistrellus abramus (Japanese pipistrelle).